The following is a 141-amino-acid chain: Cystatin (141 aa).

The signal sequence occupies residues 1 to 26; it reads MVHSQLPVAAPLRLLCALLLLPSATM. In terms of domain architecture, Cystatin spans 29-129; it reads GGISPRSVTD…CHFQVWSRPW (101 aa). The short motif at 73–77 is the Secondary area of contact element; that stretch reads QVVAG. Intrachain disulfides connect C91-C107 and C120-C140.

The protein belongs to the cystatin family. Expressed by the venom gland at an extremely low level (at protein level).

Its subcellular location is the secreted. In terms of biological role, inhibits various C1 cysteine proteases including cathepsin L, papain and cathepsin B. This protein has no toxic activity and its function in the venom is unknown. It may play a role as a housekeeping or regulatory protein. The polypeptide is Cystatin (Oxyuranus microlepidotus (Inland taipan)).